The following is a 202-amino-acid chain: Holliday junction branch migration complex subunit RuvA (202 aa).

Residues 1 to 64 (MIGRLRGTLA…EDAQLLYGFA (64 aa)) are domain I. Residues 65 to 143 (SKRERDFFRE…AWEAVPSMFA (79 aa)) are domain II. The interval 144-154 (LVPNQPDAPAP) is flexible linker. The segment at 154-202 (PVASAESDAVSALISLGYKPQEASKAVSAIKDKGLSSEDMIRRALKGMI) is domain III.

It belongs to the RuvA family. Homotetramer. Forms an RuvA(8)-RuvB(12)-Holliday junction (HJ) complex. HJ DNA is sandwiched between 2 RuvA tetramers; dsDNA enters through RuvA and exits via RuvB. An RuvB hexamer assembles on each DNA strand where it exits the tetramer. Each RuvB hexamer is contacted by two RuvA subunits (via domain III) on 2 adjacent RuvB subunits; this complex drives branch migration. In the full resolvosome a probable DNA-RuvA(4)-RuvB(12)-RuvC(2) complex forms which resolves the HJ.

The protein localises to the cytoplasm. Its function is as follows. The RuvA-RuvB-RuvC complex processes Holliday junction (HJ) DNA during genetic recombination and DNA repair, while the RuvA-RuvB complex plays an important role in the rescue of blocked DNA replication forks via replication fork reversal (RFR). RuvA specifically binds to HJ cruciform DNA, conferring on it an open structure. The RuvB hexamer acts as an ATP-dependent pump, pulling dsDNA into and through the RuvAB complex. HJ branch migration allows RuvC to scan DNA until it finds its consensus sequence, where it cleaves and resolves the cruciform DNA. In Pseudomonas fluorescens (strain ATCC BAA-477 / NRRL B-23932 / Pf-5), this protein is Holliday junction branch migration complex subunit RuvA.